The chain runs to 59 residues: Large ribosomal subunit protein bL32 (59 aa).

The disordered stretch occupies residues 1–34 (MAVQKSKVTRSRRGQRRSHDALTGPTLSVDKTTG). The segment covering 7-16 (KVTRSRRGQR) has biased composition (basic residues).

This sequence belongs to the bacterial ribosomal protein bL32 family.

In Marinomonas sp. (strain MWYL1), this protein is Large ribosomal subunit protein bL32.